Here is a 486-residue protein sequence, read N- to C-terminus: Protein DETOXIFICATION 27 (486 aa).

The interval 1 to 25 (MRGGDGEEGSESRVALLKSPHTAEE) is disordered. Transmembrane regions (helical) follow at residues 41–61 (LWQIVGPAIFSRVTTYSMLVI), 74–94 (LAAISIVNNVTVGFNFGLLLG), 124–144 (IVLFFCCVLLLPTYIFTTPVL), 153–173 (IAELSGVVAIWVIPLHFAFTL), 189–209 (VTAYAAAVALVVHILVCWLFV), 216–236 (VVGTVATISISWWVNVLILLV), 269–289 (GVMLCLENWYYRILIIMTGNL), 299–319 (LSICMAINGWEMMIPLAFFAG), 349–369 (IIGLFFWVLIMLLHNQIAWIF), 384–404 (LLLAFTVLLNSVQPVLSGVAV), 407–427 (GWQSYVAYINLGCYYCIGVPL), and 439–461 (VMGIWGGMIFGGTAVQTMILSFI).

It belongs to the multi antimicrobial extrusion (MATE) (TC 2.A.66.1) family.

Its subcellular location is the membrane. The chain is Protein DETOXIFICATION 27 from Arabidopsis thaliana (Mouse-ear cress).